The primary structure comprises 655 residues: D-xylonate dehydratase YjhG (655 aa).

This sequence belongs to the IlvD/Edd family.

It catalyses the reaction D-xylonate = 2-dehydro-3-deoxy-D-arabinonate + H2O. Activity is increased in the presence of Mn(+) and Mg(2+). Inhibited by thiol compounds. Catalyzes the dehydration of D-xylonic acid to form 2-dehydro-3-deoxy-D-pentonate. This chain is D-xylonate dehydratase YjhG (yjhG), found in Escherichia coli (strain K12).